The sequence spans 502 residues: Glutamate decarboxylase (502 aa).

Lys278 carries the N6-(pyridoxal phosphate)lysine modification. The tract at residues 471–502 (GLHHFHMDTVETQKDIIKHWRKIAGKKTSGVC) is calmodulin-binding.

This sequence belongs to the group II decarboxylase family. Pyridoxal 5'-phosphate serves as cofactor.

The enzyme catalyses L-glutamate + H(+) = 4-aminobutanoate + CO2. Its function is as follows. Catalyzes the production of GABA. The calmodulin-binding is calcium-dependent and it is proposed that this may, directly or indirectly, form a calcium regulated control of GABA biosynthesis. The protein is Glutamate decarboxylase of Solanum lycopersicum (Tomato).